Here is a 489-residue protein sequence, read N- to C-terminus: Equilibrative nucleobase transporter 1 (489 aa).

A helical transmembrane segment spans residues 17 to 37; sequence LLECLGFAGVLFGWTSLVFVF. Asn-56 carries N-linked (GlcNAc...) asparagine glycosylation. 4 helical membrane-spanning segments follow: residues 72–92, 102–122, 123–143, and 158–180; these read LIFT…GYIF, LIAI…SADS, AVLL…FLIT, and IITM…KLLY. Ser-253 bears the Phosphoserine mark. Position 258 is a phosphothreonine (Thr-258). The next 6 helical transmembrane spans lie at 277-297, 318-338, 358-380, 402-422, 426-446, and 455-475; these read FAWH…FIGT, NAFA…GLLM, AAAL…GFAV, SFLY…EHFG, GLVM…FTLI, and LYVN…PFLV.

The protein belongs to the SLC43A transporter (TC 2.A.1.44) family.

The protein resides in the basolateral cell membrane. The enzyme catalyses adenine(out) = adenine(in). The catalysed reaction is guanine(out) = guanine(in). It carries out the reaction hypoxanthine(out) = hypoxanthine(in). Sodium-independent purine-selective nucleobase transporter which mediates the equilibrative transport of extracellular purine nucleobases such as adenine, guanine and hypoxanthine. May regulate fatty acid (FA) transport in adipocytes, acting as a positive regulator of FA efflux and as a negative regulator of FA uptake. The sequence is that of Equilibrative nucleobase transporter 1 (SLC43A3) from Bos taurus (Bovine).